We begin with the raw amino-acid sequence, 100 residues long: NADH-quinone oxidoreductase subunit K 2 (100 aa).

A run of 3 helical transmembrane segments spans residues leucine 2–valine 22, isoleucine 29–phenylalanine 49, and phenylalanine 61–isoleucine 81.

Belongs to the complex I subunit 4L family. NDH-1 is composed of 14 different subunits. Subunits NuoA, H, J, K, L, M, N constitute the membrane sector of the complex.

It localises to the cell inner membrane. It catalyses the reaction a quinone + NADH + 5 H(+)(in) = a quinol + NAD(+) + 4 H(+)(out). NDH-1 shuttles electrons from NADH, via FMN and iron-sulfur (Fe-S) centers, to quinones in the respiratory chain. The immediate electron acceptor for the enzyme in this species is believed to be ubiquinone. Couples the redox reaction to proton translocation (for every two electrons transferred, four hydrogen ions are translocated across the cytoplasmic membrane), and thus conserves the redox energy in a proton gradient. The protein is NADH-quinone oxidoreductase subunit K 2 of Geobacter sp. (strain M21).